The sequence spans 68 residues: Venom-like beta-defensin (68 aa).

A signal peptide spans 1-24 (MRLLILFLAVVTLLSLAGPGSAEV). Disulfide bonds link Cys-33-Cys-60, Cys-40-Cys-54, and Cys-47-Cys-61.

Highly expressed in intestine, liver and spleen and expressed at lower levels in brain, kidney, lung, testis and venom gland.

The protein resides in the secreted. Potent antimicrobial peptide that displays activity against S.aureus and P.aeruginosa. Does not inhibit growth of E.coli. This Ornithorhynchus anatinus (Duckbill platypus) protein is Venom-like beta-defensin.